We begin with the raw amino-acid sequence, 404 residues long: Acetate kinase (404 aa).

A Mg(2+)-binding site is contributed by asparagine 7. Lysine 14 provides a ligand contact to ATP. Arginine 91 provides a ligand contact to substrate. The Proton donor/acceptor role is filled by aspartate 148. Residues 208 to 212 (HLGNG) and 283 to 285 (DLR) each bind ATP. Glutamate 388 serves as a coordination point for Mg(2+).

Belongs to the acetokinase family. Homodimer. It depends on Mg(2+) as a cofactor. Mn(2+) is required as a cofactor.

Its subcellular location is the cytoplasm. It catalyses the reaction acetate + ATP = acetyl phosphate + ADP. The protein operates within metabolic intermediate biosynthesis; acetyl-CoA biosynthesis; acetyl-CoA from acetate: step 1/2. Its function is as follows. Catalyzes the formation of acetyl phosphate from acetate and ATP. Can also catalyze the reverse reaction. The chain is Acetate kinase from Borrelia turicatae (strain 91E135).